The sequence spans 480 residues: Endothelial transcription factor GATA-2 (480 aa).

Position 73 is a phosphoserine (serine 73). An Asymmetric dimethylarginine modification is found at arginine 86. The disordered stretch occupies residues 166–208; sequence SGSHLFGFPPTPPKEVSPDPSTTGAASPASSSAGGSVARGEDK. Residues 183 to 201 are compositionally biased toward low complexity; the sequence is PDPSTTGAASPASSSAGGS. Serine 192 carries the post-translational modification Phosphoserine. 2 consecutive GATA-type zinc fingers follow at residues 295 to 319 and 349 to 373; these read CVNC…CNAC and CANC…CNAC. Residue lysine 389 forms a Glycyl lysine isopeptide (Lys-Gly) (interchain with G-Cter in SUMO2) linkage. The segment at 457 to 480 is disordered; it reads TPIHPSSSLSFGHPHPSSMVTAMG.

Interacts with BRD3. Interacts with AR and CCAR1. Interacts with MDFIC.

Its subcellular location is the nucleus. Transcriptional activator which regulates endothelin-1 gene expression in endothelial cells. Binds to the consensus sequence 5'-AGATAG-3'. In Mus musculus (Mouse), this protein is Endothelial transcription factor GATA-2 (Gata2).